Consider the following 236-residue polypeptide: Alpha-tubulin N-acetyltransferase (236 aa).

Positions 21-201 (ASVPDGVSRW…NKFVVFHGFF (181 aa)) constitute an N-acetyltransferase domain. Acetyl-CoA is bound by residues 134–147 (FYVD…GYGK) and 171–180 (SDKLLGFMKK). The segment at 217–236 (SPTGAAAAATGTKAKNEMPG) is disordered. A compositionally biased stretch (low complexity) spans 219–229 (TGAAAAATGTK).

This sequence belongs to the acetyltransferase ATAT1 family.

It catalyses the reaction L-lysyl-[alpha-tubulin] + acetyl-CoA = N(6)-acetyl-L-lysyl-[alpha-tubulin] + CoA + H(+). Specifically acetylates 'Lys-40' in alpha-tubulin on the lumenal side of microtubules. Promotes microtubule destabilization and accelerates microtubule dynamics; this activity may be independent of acetylation activity. Acetylates alpha-tubulin with a slow enzymatic rate, due to a catalytic site that is not optimized for acetyl transfer. Enters the microtubule through each end and diffuses quickly throughout the lumen of microtubules. Acetylates only long/old microtubules because of its slow acetylation rate since it does not have time to act on dynamically unstable microtubules before the enzyme is released. The protein is Alpha-tubulin N-acetyltransferase of Leishmania braziliensis.